We begin with the raw amino-acid sequence, 427 residues long: METEQQEETFTNTETNGKRPAEDMEEEQAFKRSRNTDEMVELRILLQSKNAGAVIGKGGKNIKALRTDYNASVSVPDSSGPERILSISADTETIGEILKKIIPTLEEYQHYKGSDFDCELRLLIHQSLAGGIIGVKGAKIKELRENTQTTIKLFQECCPHSTDRVVLIGGKPDRVVECIKIILDLISESPIKGRAQPYDPNFYDETYDYGGFTMMFDDRRGRPVGFPMRGRGGFDRMPPNRGGRPMPPSRRDYDDMSPRRGPPPPPPGRGGRGGSRARNLPLPPPPPPRGGDLMSYDRRGRPGDRYDGMMMQCHVDACDDMQPPELFEGGSGYDYSYAGGRGSYGDLGGPIITTQVTIPKDLAGSIIGKGGQRIKQIRHESGASIKIDEPLEGSEDRIITITGTQDQIQNAQYLLQNSVKQYSGKFF.

Residues 1–34 are disordered; it reads METEQQEETFTNTETNGKRPAEDMEEEQAFKRSR. Basic and acidic residues predominate over residues 16 to 34; sequence NGKRPAEDMEEEQAFKRSR. KH domains follow at residues 39–101 and 117–182; these read MVEL…LKKI and DCEL…IKII. Tandem repeats lie at residues 51 to 73 and 56 to 59. A 2 X 22 AA approximate repeats region spans residues 51–385; it reads AGAVIGKGGK…QIRHESGASI (335 aa). The segment at 56-371 is 5 X 4 AA repeats of G-X-G-G; sequence GKGGKNIKAL…LAGSIIGKGG (316 aa). Residues 209–246 are RNA-binding RGG-box; the sequence is YGGFTMMFDDRRGRPVGFPMRGRGGFDRMPPNRGGRPM. 3 tandem repeats follow at residues 218–223, 230–233, and 240–243. Residues 218 to 302 form a 2 X 6 AA approximate repeats region; that stretch reads DRRGRPVGFP…LMSYDRRGRP (85 aa). Positions 221–305 are disordered; that stretch reads GRPVGFPMRG…YDRRGRPGDR (85 aa). A compositionally biased stretch (basic and acidic residues) spans 249–258; it reads SRRDYDDMSP. 4 repeat units span residues 268-271, 297-302, 363-385, and 368-371. Residues 295 to 305 are compositionally biased toward basic and acidic residues; the sequence is SYDRRGRPGDR. Residues 351–415 form the KH 3 domain; sequence IITTQVTIPK…DQIQNAQYLL (65 aa).

The protein resides in the cytoplasm. It localises to the nucleus. The protein localises to the nucleoplasm. In terms of biological role, one of the major pre-mRNA-binding proteins. Binds tenaciously to poly(C) sequences. Likely to play a role in the nuclear metabolism of hnRNAs, particularly for pre-mRNAs that contain cytidine-rich sequences. Can also bind poly(C) single-stranded DNA. May play an important role in p53/TP53 response to DNA damage, acting at the level of both transcription activation and repression. As part of a ribonucleoprotein complex, may negatively regulate the transcription of genes involved in neuronal differentiation. The protein is Heterogeneous nuclear ribonucleoprotein K (HNRNPK) of Gallus gallus (Chicken).